Here is a 372-residue protein sequence, read N- to C-terminus: Citrate synthase 2 (372 aa).

Residue His257 is part of the active site. Ser284 carries the post-translational modification Phosphoserine. Residue Asp308 is part of the active site.

The protein belongs to the citrate synthase family. In terms of assembly, homodimer.

It catalyses the reaction oxaloacetate + acetyl-CoA + H2O = citrate + CoA + H(+). The protein operates within carbohydrate metabolism; tricarboxylic acid cycle; isocitrate from oxaloacetate: step 1/2. Functionally, might regulate the synthesis and function of enzymes involved in later enzymatic steps of Krebs cycle. Loss in activity results in sporulation defect. The polypeptide is Citrate synthase 2 (citZ) (Bacillus subtilis (strain 168)).